A 416-amino-acid chain; its full sequence is Gamma-glutamyl phosphate reductase (416 aa).

It belongs to the gamma-glutamyl phosphate reductase family.

Its subcellular location is the cytoplasm. The catalysed reaction is L-glutamate 5-semialdehyde + phosphate + NADP(+) = L-glutamyl 5-phosphate + NADPH + H(+). The protein operates within amino-acid biosynthesis; L-proline biosynthesis; L-glutamate 5-semialdehyde from L-glutamate: step 2/2. In terms of biological role, catalyzes the NADPH-dependent reduction of L-glutamate 5-phosphate into L-glutamate 5-semialdehyde and phosphate. The product spontaneously undergoes cyclization to form 1-pyrroline-5-carboxylate. The chain is Gamma-glutamyl phosphate reductase from Leptospira borgpetersenii serovar Hardjo-bovis (strain JB197).